The chain runs to 294 residues: MDCYLRRLKQELMSMKEVGDGLQDQMNCMMGALQELKLLQVQTALEQLEISGGGPAPGSPESPWTQLEPPQWEGSRGPVRPGACSPSNQASLGSTSSGKFPSHRSVCGRELATPPRTPLPEPQPSAQQGPELAEPDDWTSTLMSRGRNRQPLVLGDNVFADLVGNWLDLPELEKGGEKGETGEAGEPKGGRGQPRELGRRFALTANIFRKFLRSVRPDRDRLLKEKPGWVTPTASEPRAGRSQKVKKRSHSKGSGHCPFPGASEPRRGENASTGCPKALESSPSGFDINTAVWV.

Disordered regions lie at residues 50–143 (ISGG…STLM), 170–198 (PELEKGGEKGETGEAGEPKGGRGQPRELG), and 223–290 (LKEK…DINT). The segment covering 85 to 99 (SPSNQASLGSTSSGK) has biased composition (polar residues). The tract at residues 134–177 (EPDDWTSTLMSRGRNRQPLVLGDNVFADLVGNWLDLPELEKGGE) is inka box. The span at 171-198 (ELEKGGEKGETGEAGEPKGGRGQPRELG) shows a compositional bias: basic and acidic residues. Over residues 241 to 253 (RSQKVKKRSHSKG) the composition is skewed to basic residues.

It belongs to the INKA family. As to quaternary structure, interacts with PAK4.

The protein resides in the nucleus. Inhibitor of the serine/threonine-protein kinase PAK4. Acts by binding PAK4 in a substrate-like manner, inhibiting the protein kinase activity. This Bos taurus (Bovine) protein is PAK4-inhibitor INKA2.